The chain runs to 72 residues: Large ribosomal subunit protein bL31 (72 aa).

Zn(2+) is bound by residues cysteine 16, cysteine 18, cysteine 38, and cysteine 41.

This sequence belongs to the bacterial ribosomal protein bL31 family. Type A subfamily. In terms of assembly, part of the 50S ribosomal subunit. Zn(2+) serves as cofactor.

Functionally, binds the 23S rRNA. The sequence is that of Large ribosomal subunit protein bL31 from Aromatoleum aromaticum (strain DSM 19018 / LMG 30748 / EbN1) (Azoarcus sp. (strain EbN1)).